Consider the following 300-residue polypeptide: Mycothiol acetyltransferase (300 aa).

N-acetyltransferase domains follow at residues 4–140 and 151–300; these read IDWR…RPLT and VRLA…AVAD. A 1D-myo-inositol 2-(L-cysteinylamino)-2-deoxy-alpha-D-glucopyranoside-binding site is contributed by Asp36. 79-81 provides a ligand contact to acetyl-CoA; the sequence is LVV. The 1D-myo-inositol 2-(L-cysteinylamino)-2-deoxy-alpha-D-glucopyranoside site is built by Glu178, Lys219, and Glu227. 231-233 is an acetyl-CoA binding site; that stretch reads VGV. Tyr269 serves as a coordination point for 1D-myo-inositol 2-(L-cysteinylamino)-2-deoxy-alpha-D-glucopyranoside. 274–279 contributes to the acetyl-CoA binding site; sequence NGAAVK.

Belongs to the acetyltransferase family. MshD subfamily. In terms of assembly, monomer.

It carries out the reaction 1D-myo-inositol 2-(L-cysteinylamino)-2-deoxy-alpha-D-glucopyranoside + acetyl-CoA = mycothiol + CoA + H(+). In terms of biological role, catalyzes the transfer of acetyl from acetyl-CoA to desacetylmycothiol (Cys-GlcN-Ins) to form mycothiol. This chain is Mycothiol acetyltransferase, found in Mycobacterium sp. (strain JLS).